Here is a 199-residue protein sequence, read N- to C-terminus: ATP-dependent Clp protease proteolytic subunit (199 aa).

The Nucleophile role is filled by serine 99. Histidine 124 is an active-site residue.

The protein belongs to the peptidase S14 family. As to quaternary structure, fourteen ClpP subunits assemble into 2 heptameric rings which stack back to back to give a disk-like structure with a central cavity, resembling the structure of eukaryotic proteasomes.

The protein resides in the cytoplasm. It carries out the reaction Hydrolysis of proteins to small peptides in the presence of ATP and magnesium. alpha-casein is the usual test substrate. In the absence of ATP, only oligopeptides shorter than five residues are hydrolyzed (such as succinyl-Leu-Tyr-|-NHMec, and Leu-Tyr-Leu-|-Tyr-Trp, in which cleavage of the -Tyr-|-Leu- and -Tyr-|-Trp bonds also occurs).. Cleaves peptides in various proteins in a process that requires ATP hydrolysis. Has a chymotrypsin-like activity. Plays a major role in the degradation of misfolded proteins. In Lactococcus lactis subsp. cremoris (strain SK11), this protein is ATP-dependent Clp protease proteolytic subunit.